We begin with the raw amino-acid sequence, 491 residues long: MVETHKKKIANLTQPIVSFYCFQVVSVLVAVVLLLSVSRGECRKGRILEALEYSAISCRAHSASLVDFGGVGDGQTLNTKAFQDAVSELSKYGSEGGAQLYVPAGKWLTGSFSLTSHFTLFLHRDAVLLASQDISQWPVIKPLPSYGRGRDAAAGRYTSLIFGTNLTDVIITGDNGTIDGQGGLWWQRFHGGKLKYTRPYLIELMYSADIQISNLTLLNSPSWNVHPVYSRNILIQGITILAPVRSPNTDGINPDSCTNTRIEDCYIVSGDDCVAVKSGWDEYGIAYGMPTKQLVIRRLTCISPYSAVIALGSEMSGGIQDVRAEDIVAINSESGIRIKTGIGRGGYVKDIYVRGMTMKTMKWAFWMTGNYGSHADNHYDPKAFPVIQGINYRDMVAENVSMAARLEGIPSDPFTGICISNVTIHLAAKAKKVPWTCTDVEGISSGVTPTPCSTLPDQGPEKTSLCNFPAESLPIDTVELQKCSYGINYYP.

The chain crosses the membrane as a helical span at residues 15–35 (PIVSFYCFQVVSVLVAVVLLL). Asn165, Asn175, and Asn214 each carry an N-linked (GlcNAc...) asparagine glycan. PbH1 repeat units follow at residues 230–256 (SRNI…NPDS), 257–278 (CTNT…AVKS), 319–340 (IQDV…RIKT), and 348–369 (VKDI…WMTG). The active-site Proton donor is the Asp271. N-linked (GlcNAc...) asparagine glycosylation is found at Asn399 and Asn421.

This sequence belongs to the glycosyl hydrolase 28 family.

The protein localises to the membrane. The enzyme catalyses (1,4-alpha-D-galacturonosyl)n+m + H2O = (1,4-alpha-D-galacturonosyl)n + (1,4-alpha-D-galacturonosyl)m.. In Vitis vinifera (Grape), this protein is Probable polygalacturonase.